A 428-amino-acid chain; its full sequence is Serine--tRNA ligase (428 aa).

Position 235-237 (235-237 (TAE)) interacts with L-serine. Residue 266-268 (RSE) coordinates ATP. Glu-289 contacts L-serine. 353-356 (EISS) is an ATP binding site. Ser-389 is an L-serine binding site.

This sequence belongs to the class-II aminoacyl-tRNA synthetase family. Type-1 seryl-tRNA synthetase subfamily. In terms of assembly, homodimer. The tRNA molecule binds across the dimer.

It localises to the cytoplasm. The enzyme catalyses tRNA(Ser) + L-serine + ATP = L-seryl-tRNA(Ser) + AMP + diphosphate + H(+). It catalyses the reaction tRNA(Sec) + L-serine + ATP = L-seryl-tRNA(Sec) + AMP + diphosphate + H(+). The protein operates within aminoacyl-tRNA biosynthesis; selenocysteinyl-tRNA(Sec) biosynthesis; L-seryl-tRNA(Sec) from L-serine and tRNA(Sec): step 1/1. Catalyzes the attachment of serine to tRNA(Ser). Is also able to aminoacylate tRNA(Sec) with serine, to form the misacylated tRNA L-seryl-tRNA(Sec), which will be further converted into selenocysteinyl-tRNA(Sec). The sequence is that of Serine--tRNA ligase from Pasteurella multocida (strain Pm70).